A 251-amino-acid chain; its full sequence is uncharacterized protein (251 aa).

It localises to the mitochondrion. This is an uncharacterized protein from Arabidopsis thaliana (Mouse-ear cress).